The primary structure comprises 71 residues: Protein DP71L (71 aa).

Important for host CHOP inhibition regions lie at residues 16–18 (VRF) and 57–61 (LSAVL).

This sequence belongs to the asfivirus DP71L family. In terms of assembly, interacts (via C-terminus) with host PPP1CB.

Its function is as follows. Interacts with the host phosphatase PP1 catalytic subunit (PPP1CB) and recruits it to dephosphorylate EIF2S1/eIF2alpha and therefore restores the host translation that has been shut-down by the host. Also inhibits the EIF2S1/eIF2alpha-ATF4-DDIT3/CHOP pathway. The sequence is that of Protein DP71L from Ornithodoros (relapsing fever ticks).